Here is a 634-residue protein sequence, read N- to C-terminus: 1-deoxy-D-xylulose-5-phosphate synthase (634 aa).

Thiamine diphosphate-binding positions include His73 and 114 to 116 (GHS). Position 145 (Asp145) interacts with Mg(2+). Thiamine diphosphate is bound by residues 146 to 147 (GS), Asn174, Phe285, and Glu367. Residue Asn174 participates in Mg(2+) binding.

Belongs to the transketolase family. DXPS subfamily. As to quaternary structure, homodimer. It depends on Mg(2+) as a cofactor. Thiamine diphosphate is required as a cofactor.

It carries out the reaction D-glyceraldehyde 3-phosphate + pyruvate + H(+) = 1-deoxy-D-xylulose 5-phosphate + CO2. It participates in metabolic intermediate biosynthesis; 1-deoxy-D-xylulose 5-phosphate biosynthesis; 1-deoxy-D-xylulose 5-phosphate from D-glyceraldehyde 3-phosphate and pyruvate: step 1/1. Catalyzes the acyloin condensation reaction between C atoms 2 and 3 of pyruvate and glyceraldehyde 3-phosphate to yield 1-deoxy-D-xylulose-5-phosphate (DXP). This chain is 1-deoxy-D-xylulose-5-phosphate synthase, found in Syntrophotalea carbinolica (strain DSM 2380 / NBRC 103641 / GraBd1) (Pelobacter carbinolicus).